The chain runs to 407 residues: Arginine biosynthesis bifunctional protein ArgJ (407 aa).

Substrate-binding residues include Thr-169, Lys-192, Thr-203, Glu-283, Asn-402, and Ser-407. The Nucleophile role is filled by Thr-203.

This sequence belongs to the ArgJ family. In terms of assembly, heterotetramer of two alpha and two beta chains.

The protein localises to the cytoplasm. It catalyses the reaction N(2)-acetyl-L-ornithine + L-glutamate = N-acetyl-L-glutamate + L-ornithine. The catalysed reaction is L-glutamate + acetyl-CoA = N-acetyl-L-glutamate + CoA + H(+). It functions in the pathway amino-acid biosynthesis; L-arginine biosynthesis; L-ornithine and N-acetyl-L-glutamate from L-glutamate and N(2)-acetyl-L-ornithine (cyclic): step 1/1. Its pathway is amino-acid biosynthesis; L-arginine biosynthesis; N(2)-acetyl-L-ornithine from L-glutamate: step 1/4. Catalyzes two activities which are involved in the cyclic version of arginine biosynthesis: the synthesis of N-acetylglutamate from glutamate and acetyl-CoA as the acetyl donor, and of ornithine by transacetylation between N(2)-acetylornithine and glutamate. In Mycobacterium leprae (strain TN), this protein is Arginine biosynthesis bifunctional protein ArgJ.